The chain runs to 425 residues: Dihydroorotase (425 aa).

Zn(2+)-binding residues include His56 and His58. Residues 58–60 (HYR) and Asn90 each bind substrate. Residues Asp148, His175, and His228 each contribute to the Zn(2+) site. Asn274 serves as a coordination point for substrate. A Zn(2+)-binding site is contributed by Asp301. Asp301 is an active-site residue. Substrate-binding positions include His305 and 319–320 (FG).

This sequence belongs to the metallo-dependent hydrolases superfamily. DHOase family. Class I DHOase subfamily. It depends on Zn(2+) as a cofactor.

The catalysed reaction is (S)-dihydroorotate + H2O = N-carbamoyl-L-aspartate + H(+). It participates in pyrimidine metabolism; UMP biosynthesis via de novo pathway; (S)-dihydroorotate from bicarbonate: step 3/3. In terms of biological role, catalyzes the reversible cyclization of carbamoyl aspartate to dihydroorotate. The protein is Dihydroorotase of Lactobacillus johnsonii (strain CNCM I-12250 / La1 / NCC 533).